A 326-amino-acid polypeptide reads, in one-letter code: tRNA-modifying protein YgfZ (326 aa).

The folate site is built by Trp27 and Trp189.

The protein belongs to the tRNA-modifying YgfZ family.

The protein localises to the cytoplasm. Functionally, folate-binding protein involved in regulating the level of ATP-DnaA and in the modification of some tRNAs. It is probably a key factor in regulatory networks that act via tRNA modification, such as initiation of chromosomal replication. The chain is tRNA-modifying protein YgfZ from Enterobacter sp. (strain 638).